Consider the following 793-residue polypeptide: Toll-like receptor 6 (793 aa).

A signal peptide spans 1-23 (MIKDKESPIRSCHFVYIVALVFG). Topologically, residues 24–584 (TIIQFSDESE…FQVSELSCNT (561 aa)) are extracellular. LRR repeat units lie at residues 54–77 (TKVLDLSQNNISELHLSDISFLSG), 78–101 (LRVLRLSHNRIQGLDISIFKFNHD), 102–122 (LEYLDLSHNQLQKISCHPITT), 123–147 (TLKHLDLSFNDFDALPICKEFGNLT), 148–168 (QLNFLGLSATKLQQLDLLPIA), 169–196 (HLHLSCILLDLEDYMKENKKESLQILNT), 197–219 (KKLHLVFHPNSFFSVQVDISANS), 220–250 (LGCLQLTNIKLNDYNCQVLLKFLSGLTGGPT), 251–277 (LLNFTLNHVETTWKCLVKVFQFLWPKP), 278–303 (IEYLNIYNLTIVESIDEEVFTYYKTT), 304–330 (LKALKIEHITNKVFIFSQTALYTVFSE), 331–354 (MNILMLTISDTRFIHMLCPQEPST), 355–378 (FKFLNFTQNSFTDSVFQNCDTLAR), 379–404 (LETLILQKNELKDLFKTSLMTKDMLS), 405–428 (LETLDVSWNSLEYDRSNGNCSWVG), 429–449 (SIVVLNLSSNALTDSVFRCLP), 450–473 (PRIKVLDLHNNRIRSIPKDVTGLE), 474–495 (TLQELNLASNSLAHLPGCGIFS), and 496–519 (SLSILIIEHNSISNPSADFFQSCQ). Asparagine 63 carries N-linked (GlcNAc...) asparagine glycosylation. An intrachain disulfide couples cysteine 117 to cysteine 140. Asparagine 145 is a glycosylation site (N-linked (GlcNAc...) asparagine). A disulfide bridge links cysteine 235 with cysteine 265. N-linked (GlcNAc...) asparagine glycosylation is found at asparagine 253 and asparagine 285. The cysteines at positions 348 and 373 are disulfide-linked. The N-linked (GlcNAc...) asparagine glycan is linked to asparagine 359. N-linked (GlcNAc...) asparagine glycosylation is found at asparagine 423 and asparagine 434. Cysteine 424 and cysteine 447 form a disulfide bridge. The 56-residue stretch at 520–575 (KIRSLKAGNNPFQCSCELRDFIQSVGQVSSDVVEGWPESYKCDYPESYKGTPLKDF) folds into the LRRCT domain. A helical transmembrane segment spans residues 585 to 605 (ALLIITIVVPGLVLAVAVTVL). At 606 to 793 (CIYLDLPWYL…KLMEKAAEIH (188 aa)) the chain is on the cytoplasmic side. The TIR domain occupies 640-781 (LQFHAFISYS…LFWANLRASI (142 aa)).

It belongs to the Toll-like receptor family. As to quaternary structure, homodimer (via cytoplasmic TIR domain). Heterodimer with TLR2 via their respective extracellular domains. Binds MYD88 via their respective TIR domains. Interacts with CD36, following CD36 stimulation by oxLDL or amyloid-beta 42, and forms a heterodimer with TLR4. The trimeric complex is internalized and triggers inflammatory response. LYN kinase activity facilitates TLR4-TLR6 heterodimerization and signal initiation. The heterodimer TLR2:TLR6 interacts with CD14 and CD36 in response to triacylated lipopeptides. In terms of tissue distribution, highest expression levels seen in blood and lymph node, intermediate expression seen in spleen and lowest expression seen in the liver, lung and udder cistern.

Its subcellular location is the cell membrane. The protein localises to the cytoplasmic vesicle. The protein resides in the phagosome membrane. It localises to the membrane raft. It is found in the golgi apparatus. Participates in the innate immune response to Gram-positive bacteria and fungi. Specifically recognizes diacylated and, to a lesser extent, triacylated lipopeptides. In response to diacylated lipopeptides, forms the activation cluster TLR2:TLR6:CD14:CD36, this cluster triggers signaling from the cell surface and subsequently is targeted to the Golgi in a lipid-raft dependent pathway. Acts via MYD88 and TRAF6, leading to NF-kappa-B activation, cytokine secretion and the inflammatory response. Recognizes mycoplasmal macrophage-activating lipopeptide-2kD (MALP-2), soluble tuberculosis factor (STF), phenol-soluble modulin (PSM) and B.burgdorferi outer surface protein A lipoprotein (OspA-L) cooperatively with TLR2. In complex with TLR4, promotes sterile inflammation in monocytes/macrophages in response to oxidized low-density lipoprotein (oxLDL) or amyloid-beta 42. In this context, the initial signal is provided by oxLDL- or amyloid-beta 42-binding to CD36. This event induces the formation of a heterodimer of TLR4 and TLR6, which is rapidly internalized and triggers inflammatory response, leading to the NF-kappa-B-dependent production of CXCL1, CXCL2 and CCL9 cytokines, via MYD88 signaling pathway, and CCL5 cytokine, via TICAM1 signaling pathway, as well as IL1B secretion. The polypeptide is Toll-like receptor 6 (Bos taurus (Bovine)).